The primary structure comprises 769 residues: Protein lethal(2)denticleless (769 aa).

WD repeat units follow at residues 99 to 129, 143 to 174, 194 to 249, 264 to 303, 320 to 349, and 362 to 393; these read CHFNAVFDLEWAPGQMRFVSASGDHTARLWE, GHTRSVKSAAFKRTDPAVFATGGRDGAILIWD, GHTG…KVWD, RHKLPYAGSSTFRGFTNLIVDASGTRLYANCMDNTIYCYN, NSTFYIKSCLSPDGKYLLSGSSDERAYIWN, and GHTVEVTCVAWGSSHDCPIVTCSDDARHKIWR. The interval 196 to 221 is disordered; that stretch reads TGGPGTPVSQRKQRTRTPKMAGGTTS. At T201 the chain carries Phosphothreonine. S204 is subject to Phosphoserine. Disordered stretches follow at residues 448–467, 476–562, and 655–769; these read RLMDQNERTPGSVEKTTTKR, AGQE…HVYT, and SPRL…VGSD. T456 is modified (phosphothreonine). S459 carries the phosphoserine modification. Residues 503–518 show a composition bias toward polar residues; sequence PSSQETACRHIQLQSI. S524 is modified (phosphoserine). The span at 524–533 shows a compositional bias: basic and acidic residues; sequence SPSKRQKENS. Residues 546–562 are compositionally biased toward polar residues; the sequence is STPSHSPLSENVNHVYT. At S655 the chain carries Phosphoserine. Positions 657-666 are enriched in polar residues; sequence RLQSLRQSEC. S679, S691, and S711 each carry phosphoserine. Residues 689-704 are compositionally biased toward low complexity; it reads AGSSSHSHSQSQPKTP. A compositionally biased stretch (polar residues) spans 705 to 714; that stretch reads TSSRRNSETT. The segment covering 728–743 has biased composition (low complexity); that stretch reads PAEETTTTNAAPSSSD. The segment covering 758 to 769 has biased composition (polar residues); sequence SMRTPTTAVGSD.

Belongs to the WD repeat cdt2 family. As to quaternary structure, component of the DCX(DTL) E3 ubiquitin ligase complex, at least composed of Cul-4, pic/DDB1, l(2)dtl/CDT2 and Roc1a. As to expression, ubiquitously expressed during embryogenesis with no sign of tissue specificity in expression up to stage 17.

It is found in the cytoplasm. The protein operates within protein modification; protein ubiquitination. Its function is as follows. Substrate-specific adapter of a DCX (DDB1-CUL4-X-box) E3 ubiquitin-protein ligase complex required for cell cycle control. The DCX(DTL) complex, also named CRL4(CDT2) complex, mediates the polyubiquitination and subsequent degradation of E2f during S phase. E2f degradation is necessary to ensure proper development. Substrates require their interaction with PCNA for their polyubiquitination: substrates interact with PCNA via their PIP-box, leading to recruit the DCX(DTL) complex. The chain is Protein lethal(2)denticleless (l(2)dtl) from Drosophila melanogaster (Fruit fly).